Reading from the N-terminus, the 201-residue chain is 3-isopropylmalate dehydratase small subunit (201 aa).

The protein belongs to the LeuD family. LeuD type 1 subfamily. As to quaternary structure, heterodimer of LeuC and LeuD.

The enzyme catalyses (2R,3S)-3-isopropylmalate = (2S)-2-isopropylmalate. Its pathway is amino-acid biosynthesis; L-leucine biosynthesis; L-leucine from 3-methyl-2-oxobutanoate: step 2/4. Catalyzes the isomerization between 2-isopropylmalate and 3-isopropylmalate, via the formation of 2-isopropylmaleate. In Shewanella woodyi (strain ATCC 51908 / MS32), this protein is 3-isopropylmalate dehydratase small subunit.